We begin with the raw amino-acid sequence, 229 residues long: UPF0758 protein Caur_3603 (229 aa).

The MPN domain maps to 105–227 (PIRSPADVAT…YVSLRERGLG (123 aa)). 3 residues coordinate Zn(2+): His-176, His-178, and Asp-189. The short motif at 176–189 (HNHPSGEPTPSMED) is the JAMM motif element.

Belongs to the UPF0758 family.

This chain is UPF0758 protein Caur_3603, found in Chloroflexus aurantiacus (strain ATCC 29366 / DSM 635 / J-10-fl).